The chain runs to 171 residues: Mitochondrial import inner membrane translocase subunit Tim17-A (171 aa).

Cysteines 9 and 78 form a disulfide. 3 helical membrane passes run 17–37 (CGGAFTMGTIGGGIFQAFKGF), 63–77 (GGSFAVWGGLFSTID), and 113–133 (VGSAAMGGILLALIEGAGILL). The segment at 147-171 (FAEDHSQLPSSQLPSSPFGDYRQYQ) is disordered. Low complexity predominate over residues 153-163 (QLPSSQLPSSP).

This sequence belongs to the Tim17/Tim22/Tim23 family. Component of the TIM23 complex at least composed of TIMM23, TIMM17 (TIMM17A or TIMM17B) and TIMM50. The complex interacts with the TIMM44 component of the PAM complex and with DNAJC15. Post-translationally, degraded by YMEL1 downstream of the integrated stress response (ISR).

The protein resides in the mitochondrion inner membrane. Functionally, essential component of the TIM23 complex, a complex that mediates the translocation of transit peptide-containing proteins across the mitochondrial inner membrane. This chain is Mitochondrial import inner membrane translocase subunit Tim17-A (Timm17a), found in Rattus norvegicus (Rat).